The sequence spans 115 residues: MPMFIVNTNVPRASVPDGFLSELTQQLAQATGKPPQYIAVHVVPDQLMAFGGSSEPCALCSLHSIGKIGGAQNRSYSKLLCGLLAERLRISPDRVYINYYDMNAANVGWNNSTFA.

Pro-2 (proton acceptor; via imino nitrogen) is an active-site residue. The substrate site is built by Lys-33 and Ile-65. Lys-78 bears the N6-acetyllysine; alternate mark. Lys-78 carries the N6-succinyllysine; alternate modification. Asn-98 is a binding site for substrate.

It belongs to the MIF family. In terms of assembly, homotrimer. Interacts with CXCR2 extracellular domain. Interacts with the CD74 extracellular domain, USO1, COPS5 and BNIPL.

It localises to the secreted. The protein localises to the cytoplasm. It catalyses the reaction 3-phenylpyruvate = enol-phenylpyruvate. The enzyme catalyses L-dopachrome = 5,6-dihydroxyindole-2-carboxylate. Its function is as follows. Pro-inflammatory cytokine involved in the innate immune response to bacterial pathogens. The expression of MIF at sites of inflammation suggests a role as mediator in regulating the function of macrophages in host defense. Counteracts the anti-inflammatory activity of glucocorticoids. Has phenylpyruvate tautomerase and dopachrome tautomerase activity (in vitro), but the physiological substrate is not known. It is not clear whether the tautomerase activity has any physiological relevance, and whether it is important for cytokine activity. This is Macrophage migration inhibitory factor from Homo sapiens (Human).